We begin with the raw amino-acid sequence, 1347 residues long: G-protein coupled receptor-associated sorting protein 1 (1347 aa).

Disordered regions lie at residues 1 to 75 (MTRA…AYAK), 145 to 174 (ESIP…SWYR), and 188 to 281 (DFKW…NSRS). Over residues 21–33 (ENANAAEVEPEAP) the composition is skewed to low complexity. The segment covering 211–226 (FRPRKSMKANNRFRHM) has biased composition (basic residues). The segment covering 263–278 (PKDKTKVWSKPKEEPN) has biased composition (basic and acidic residues). S295 is modified (phosphoserine). 3 disordered regions span residues 310 to 344 (GEEA…AMSG), 364 to 396 (FSKS…QEAR), and 460 to 485 (QVSS…SKSM). Positions 316–325 (RSKPRARKGV) are enriched in basic residues. A compositionally biased stretch (basic and acidic residues) spans 370–396 (KKEPRTRAVPKEEVKTKARASTKQEAR). The span at 461-484 (VSSFCLGSGKKSSMESGPKATSKS) shows a compositional bias: polar residues. Phosphoserine is present on residues S619 and S626. T860 carries the phosphothreonine modification. S862 carries the post-translational modification Phosphoserine.

It belongs to the GPRASP family. Interacts with cytoplasmic tails of a variety of G-protein coupled receptors such as delta opioid receptor/OPRD1, beta-2 adrenergic receptor/ADRB2 and D4 dopamine receptor/DRD4 as well as D2 dopamine receptor/DRD2. Interacts with PER1. Interacts with BECN2; the interaction is direct. In terms of tissue distribution, expressed in the brain, with higher expression in the hippocampus, hypothalamus and olfactory bulb.

Its subcellular location is the cytoplasm. Functionally, modulates lysosomal sorting and functional down-regulation of a variety of G-protein coupled receptors. Targets receptors for degradation in lysosomes via its interaction with BECN2. This chain is G-protein coupled receptor-associated sorting protein 1 (Gprasp1), found in Mus musculus (Mouse).